Consider the following 902-residue polypeptide: Alanine--tRNA ligase (902 aa).

Zn(2+)-binding residues include H567, H571, C671, and H675.

The protein belongs to the class-II aminoacyl-tRNA synthetase family. It depends on Zn(2+) as a cofactor.

It is found in the cytoplasm. The catalysed reaction is tRNA(Ala) + L-alanine + ATP = L-alanyl-tRNA(Ala) + AMP + diphosphate. In terms of biological role, catalyzes the attachment of alanine to tRNA(Ala) in a two-step reaction: alanine is first activated by ATP to form Ala-AMP and then transferred to the acceptor end of tRNA(Ala). Also edits incorrectly charged Ser-tRNA(Ala) and Gly-tRNA(Ala) via its editing domain. This Mycoplasmoides gallisepticum (strain R(low / passage 15 / clone 2)) (Mycoplasma gallisepticum) protein is Alanine--tRNA ligase.